The chain runs to 444 residues: C4-dicarboxylate transport protein 1 (444 aa).

The next 9 helical transmembrane spans lie at 9–29 (SIFL…VGIP), 42–62 (FIKL…VNGI), 78–98 (SVIY…VVAY), 152–172 (ILQV…VGEQ), 190–210 (IMGM…AFTT), 221–241 (LGAL…AVLG), 307–327 (FSIY…TPLA), 354–374 (VILA…LVLV), and 380–400 (FMGI…TVTI).

Belongs to the dicarboxylate/amino acid:cation symporter (DAACS) (TC 2.A.23) family.

It localises to the cell inner membrane. Responsible for the transport of dicarboxylates such as succinate, fumarate, and malate from the periplasm across the membrane. The sequence is that of C4-dicarboxylate transport protein 1 from Pseudomonas paraeruginosa (strain DSM 24068 / PA7) (Pseudomonas aeruginosa (strain PA7)).